Reading from the N-terminus, the 720-residue chain is DNA ligase (720 aa).

NAD(+) contacts are provided by residues 60–64, 109–110, and E140; these read DYDYD and SL. K142 serves as the catalytic N6-AMP-lysine intermediate. Residues R163 and E201 each contribute to the NAD(+) site. Residues 220-239 form a disordered region; the sequence is GLPPFANPRNAAAGSIRQKD. The NAD(+) site is built by K320 and K344. Residues C438, C441, C456, and C461 each contribute to the Zn(2+) site. Residues 619–709 form the BRCT domain; that stretch reads KVADVLKGKT…VDLEKIKKED (91 aa).

The protein belongs to the NAD-dependent DNA ligase family. LigA subfamily. Mn(2+) serves as cofactor. It depends on Mg(2+) as a cofactor.

The enzyme catalyses NAD(+) + (deoxyribonucleotide)n-3'-hydroxyl + 5'-phospho-(deoxyribonucleotide)m = (deoxyribonucleotide)n+m + AMP + beta-nicotinamide D-nucleotide.. Its function is as follows. DNA ligase that catalyzes the formation of phosphodiester linkages between 5'-phosphoryl and 3'-hydroxyl groups in double-stranded DNA using NAD as a coenzyme and as the energy source for the reaction. It is essential for DNA replication and repair of damaged DNA. The chain is DNA ligase from Aquifex aeolicus (strain VF5).